A 193-amino-acid polypeptide reads, in one-letter code: Acyl carrier protein phosphodiesterase (193 aa).

This sequence belongs to the AcpH family.

It carries out the reaction holo-[ACP] + H2O = apo-[ACP] + (R)-4'-phosphopantetheine + H(+). Functionally, converts holo-ACP to apo-ACP by hydrolytic cleavage of the phosphopantetheine prosthetic group from ACP. In Salmonella newport (strain SL254), this protein is Acyl carrier protein phosphodiesterase.